The chain runs to 84 residues: Large ribosomal subunit protein bL27 (84 aa).

This sequence belongs to the bacterial ribosomal protein bL27 family.

In Salinispora tropica (strain ATCC BAA-916 / DSM 44818 / JCM 13857 / NBRC 105044 / CNB-440), this protein is Large ribosomal subunit protein bL27.